A 94-amino-acid polypeptide reads, in one-letter code: Pyrimidine/purine nucleoside phosphorylase (94 aa).

The protein belongs to the nucleoside phosphorylase PpnP family.

The catalysed reaction is a purine D-ribonucleoside + phosphate = a purine nucleobase + alpha-D-ribose 1-phosphate. The enzyme catalyses adenosine + phosphate = alpha-D-ribose 1-phosphate + adenine. It carries out the reaction cytidine + phosphate = cytosine + alpha-D-ribose 1-phosphate. It catalyses the reaction guanosine + phosphate = alpha-D-ribose 1-phosphate + guanine. The catalysed reaction is inosine + phosphate = alpha-D-ribose 1-phosphate + hypoxanthine. The enzyme catalyses thymidine + phosphate = 2-deoxy-alpha-D-ribose 1-phosphate + thymine. It carries out the reaction uridine + phosphate = alpha-D-ribose 1-phosphate + uracil. It catalyses the reaction xanthosine + phosphate = alpha-D-ribose 1-phosphate + xanthine. Catalyzes the phosphorolysis of diverse nucleosides, yielding D-ribose 1-phosphate and the respective free bases. Can use uridine, adenosine, guanosine, cytidine, thymidine, inosine and xanthosine as substrates. Also catalyzes the reverse reactions. The sequence is that of Pyrimidine/purine nucleoside phosphorylase from Klebsiella pneumoniae (strain 342).